Here is a 5085-residue protein sequence, read N- to C-terminus: Linear gramicidin synthase subunit D (5085 aa).

Carrier domains lie at 962-1037 (APRT…AAAG), 2023-2097 (SPST…EEKA), 3544-3619 (APRN…ELLT), and 4601-4676 (APQT…EEII). O-(pantetheine 4'-phosphoryl)serine is present on residues Ser-997, Ser-2058, Ser-3579, and Ser-4636.

The protein belongs to the ATP-dependent AMP-binding enzyme family. In terms of assembly, large multienzyme complex composed of 4 subunits; LgrA, LgrB, LgrC and LgrD. Pantetheine 4'-phosphate is required as a cofactor.

Its function is as follows. Activates the 13th to the 16th (Trp, D-Leu, Trp and Gly) amino acids in linear gramicidin and catalyzes the formation of the peptide bond between them. This enzyme is also responsible for the epimerization of the 14th (D-Leu) amino acid. It also catalyzes the NAD(P)H-dependent reduction of the C-terminal glycine residue of the N-formylated 16-mer peptide, that binds to the peptidyl carrier domain of the terminal module of this protein, to form a peptidyl-aldehyde intermediate that is released from the enzyme complex. This chain is Linear gramicidin synthase subunit D (lgrD), found in Brevibacillus parabrevis.